The sequence spans 365 residues: UDP-N-acetylglucosamine--N-acetylmuramyl-(pentapeptide) pyrophosphoryl-undecaprenol N-acetylglucosamine transferase (365 aa).

UDP-N-acetyl-alpha-D-glucosamine is bound by residues 10–12 (TGG), Asn124, Arg165, Ser193, Ile248, and Gln293.

It belongs to the glycosyltransferase 28 family. MurG subfamily.

Its subcellular location is the cell inner membrane. The enzyme catalyses di-trans,octa-cis-undecaprenyl diphospho-N-acetyl-alpha-D-muramoyl-L-alanyl-D-glutamyl-meso-2,6-diaminopimeloyl-D-alanyl-D-alanine + UDP-N-acetyl-alpha-D-glucosamine = di-trans,octa-cis-undecaprenyl diphospho-[N-acetyl-alpha-D-glucosaminyl-(1-&gt;4)]-N-acetyl-alpha-D-muramoyl-L-alanyl-D-glutamyl-meso-2,6-diaminopimeloyl-D-alanyl-D-alanine + UDP + H(+). The protein operates within cell wall biogenesis; peptidoglycan biosynthesis. Cell wall formation. Catalyzes the transfer of a GlcNAc subunit on undecaprenyl-pyrophosphoryl-MurNAc-pentapeptide (lipid intermediate I) to form undecaprenyl-pyrophosphoryl-MurNAc-(pentapeptide)GlcNAc (lipid intermediate II). This is UDP-N-acetylglucosamine--N-acetylmuramyl-(pentapeptide) pyrophosphoryl-undecaprenol N-acetylglucosamine transferase from Geotalea uraniireducens (strain Rf4) (Geobacter uraniireducens).